We begin with the raw amino-acid sequence, 474 residues long: Pyoverdine export outer membrane protein OpmQ (474 aa).

Residues 1–17 form the signal peptide; the sequence is MSMKNLSLISACLLLGA. C18 is lipidated: N-palmitoyl cysteine. C18 is lipidated: S-diacylglycerol cysteine.

This sequence belongs to the outer membrane factor (OMF) (TC 1.B.17) family. Part of the tripartite efflux system PvdRT-OpmQ, which is composed of an inner membrane component with both ATPase and permease domains, PvdT, a periplasmic membrane fusion protein, PvdR, and an outer membrane component, OpmQ.

The protein resides in the cell outer membrane. In terms of biological role, part of the tripartite efflux system PvdRT-OpmQ required for the secretion into the extracellular milieu of the siderophore pyoverdine (PVD), which is involved in iron acquisition. The system is responsible for export of newly synthesized PVD after the final steps of biosynthesis have taken place in the periplasm. It is also responsible for recycling of PVD after internalization of ferri-PVD into the periplasm by the outer-membrane receptor FpvA and release of iron from PVD, thus making PVD available for new cycles of iron uptake. In addition, can expel unwanted metals complexed with PVD from the periplasm into the extracellular medium. This chain is Pyoverdine export outer membrane protein OpmQ, found in Pseudomonas aeruginosa (strain ATCC 15692 / DSM 22644 / CIP 104116 / JCM 14847 / LMG 12228 / 1C / PRS 101 / PAO1).